The chain runs to 126 residues: Holo-[acyl-carrier-protein] synthase (126 aa).

Mg(2+) contacts are provided by aspartate 9 and glutamate 58.

Belongs to the P-Pant transferase superfamily. AcpS family. The cofactor is Mg(2+).

Its subcellular location is the cytoplasm. It catalyses the reaction apo-[ACP] + CoA = holo-[ACP] + adenosine 3',5'-bisphosphate + H(+). Its function is as follows. Transfers the 4'-phosphopantetheine moiety from coenzyme A to a Ser of acyl-carrier-protein. In Serratia proteamaculans (strain 568), this protein is Holo-[acyl-carrier-protein] synthase.